Reading from the N-terminus, the 863-residue chain is Protein translocase subunit SecA (863 aa).

ATP contacts are provided by residues Gln88, 106-110, and Asp496; that span reads GEGKT. Positions 818–842 are disordered; it reads EVKTEPVITKKKPARNEPCPCGSGK. Cys836, Cys838, Cys847, and Cys848 together coordinate Zn(2+).

This sequence belongs to the SecA family. Monomer and homodimer. Part of the essential Sec protein translocation apparatus which comprises SecA, SecYEG and auxiliary proteins SecDF-YajC and YidC. Zn(2+) serves as cofactor.

It localises to the cell inner membrane. The protein localises to the cytoplasm. It carries out the reaction ATP + H2O + cellular proteinSide 1 = ADP + phosphate + cellular proteinSide 2.. In terms of biological role, part of the Sec protein translocase complex. Interacts with the SecYEG preprotein conducting channel. Has a central role in coupling the hydrolysis of ATP to the transfer of proteins into and across the cell membrane, serving as an ATP-driven molecular motor driving the stepwise translocation of polypeptide chains across the membrane. In Nitratiruptor sp. (strain SB155-2), this protein is Protein translocase subunit SecA.